A 237-amino-acid chain; its full sequence is Ribosomal RNA small subunit methyltransferase G (237 aa).

S-adenosyl-L-methionine contacts are provided by residues glycine 78, phenylalanine 83, 129–130 (AE), and arginine 148.

This sequence belongs to the methyltransferase superfamily. RNA methyltransferase RsmG family.

It localises to the cytoplasm. In terms of biological role, specifically methylates the N7 position of a guanine in 16S rRNA. The sequence is that of Ribosomal RNA small subunit methyltransferase G from Streptococcus pyogenes serotype M12 (strain MGAS9429).